A 231-amino-acid chain; its full sequence is Phosphatidylserine decarboxylase proenzyme (231 aa).

Ser188 (schiff-base intermediate with substrate; via pyruvic acid) is an active-site residue. Residue Ser188 is modified to Pyruvic acid (Ser); by autocatalysis.

Belongs to the phosphatidylserine decarboxylase family. PSD-A subfamily. As to quaternary structure, heterodimer of a large membrane-associated beta subunit and a small pyruvoyl-containing alpha subunit. Pyruvate serves as cofactor. Post-translationally, is synthesized initially as an inactive proenzyme. Formation of the active enzyme involves a self-maturation process in which the active site pyruvoyl group is generated from an internal serine residue via an autocatalytic post-translational modification. Two non-identical subunits are generated from the proenzyme in this reaction, and the pyruvate is formed at the N-terminus of the alpha chain, which is derived from the carboxyl end of the proenzyme. The post-translation cleavage follows an unusual pathway, termed non-hydrolytic serinolysis, in which the side chain hydroxyl group of the serine supplies its oxygen atom to form the C-terminus of the beta chain, while the remainder of the serine residue undergoes an oxidative deamination to produce ammonia and the pyruvoyl prosthetic group on the alpha chain.

It is found in the cell membrane. It carries out the reaction a 1,2-diacyl-sn-glycero-3-phospho-L-serine + H(+) = a 1,2-diacyl-sn-glycero-3-phosphoethanolamine + CO2. It functions in the pathway phospholipid metabolism; phosphatidylethanolamine biosynthesis; phosphatidylethanolamine from CDP-diacylglycerol: step 2/2. Catalyzes the formation of phosphatidylethanolamine (PtdEtn) from phosphatidylserine (PtdSer). The chain is Phosphatidylserine decarboxylase proenzyme from Rickettsia africae (strain ESF-5).